Consider the following 71-residue polypeptide: Large ribosomal subunit protein bL31 (71 aa).

Residues Cys-16, Cys-18, Cys-37, and Cys-40 each coordinate Zn(2+).

It belongs to the bacterial ribosomal protein bL31 family. Type A subfamily. Part of the 50S ribosomal subunit. Requires Zn(2+) as cofactor.

In terms of biological role, binds the 23S rRNA. The protein is Large ribosomal subunit protein bL31 of Pseudoalteromonas translucida (strain TAC 125).